The chain runs to 272 residues: Large ribosomal subunit protein uL2cz/uL2cy (272 aa).

The span at 1 to 13 (MHLYKTSTPSTRN) shows a compositional bias: polar residues. Disordered stretches follow at residues 1–27 (MHLY…PRNN) and 222–272 (NPVD…RRSK).

It belongs to the universal ribosomal protein uL2 family. Part of the 50S ribosomal subunit.

The protein localises to the plastid. It localises to the chloroplast. This Buxus microphylla (Littleleaf boxwood) protein is Large ribosomal subunit protein uL2cz/uL2cy (rpl2-A).